Reading from the N-terminus, the 91-residue chain is Small integral membrane protein 13 (91 aa).

A helical membrane pass occupies residues 10–30; it reads LVFVATLLIVLLLMVCGWYFV. A disordered region spans residues 47–91; sequence DTGSQEGDHEPSGSETEEDTSSSPHRIRSARQRRAPADEGHRPLT. A phosphoserine mark is found at Ser58 and Ser60. A Phosphothreonine modification is found at Thr62. Ser69 carries the post-translational modification Phosphoserine. Positions 71–80 are enriched in basic residues; the sequence is HRIRSARQRR. Basic and acidic residues predominate over residues 81 to 91; it reads APADEGHRPLT.

This sequence belongs to the SMIM13 family.

Its subcellular location is the membrane. The protein is Small integral membrane protein 13 (SMIM13) of Homo sapiens (Human).